The chain runs to 96 residues: SAGA complex subunit SUS1 (96 aa).

A Glycyl lysine isopeptide (Lys-Gly) (interchain with G-Cter in ubiquitin) cross-link involves residue Lys-68.

The protein belongs to the ENY2 family. In terms of assembly, component of the 1.8 MDa SAGA (Spt-Ada-Gcn5 acetyltransferase) complex, which is composed of 19 subunits TRA1, SPT7, TAF5, NGG1/ADA3, SGF73, SPT20/ADA5, SPT8, TAF12, TAF6, HFI1/ADA1, UBP8, GCN5, ADA2, SPT3, SGF29, TAF10, TAF9, SGF11 and SUS1. The SAGA complex is composed of 4 modules, namely the HAT (histone acetyltransferase) module (GCN5, ADA2, NGG1/ADA3 and SGF29), the DUB (deubiquitinating) module (UBP8, SGF11, SGF73 and SUS1), the core or TAF (TBP-associated factor) module (TAF5, TAF6, TAF9, TAF10 and TAF12), and the Tra1 or SPT (Suppressor of Ty) module (TRA1, HFI1/ADA1, SPT3, SPT7, SPT8 and SPT20/ADA5). The Tra1/SPT module binds activators, the core module recruits TBP (TATA-binding protein), the HAT module contains the histone H3 acetyltransferase GCN5, and the DUB module comprises the histone H2B deubiquitinase UBP8. Also identified in an altered form of SAGA, named SALSA (SAGA altered, Spt8 absent) or SLIK (SAGA-like) complex, which contains a C-terminal truncated form of SPT7 and is missing SPT8. However, it has been shown that the SAGA and SAGA-like SALSA/SLIK transcriptional coactivators are structurally and biochemically equivalent. Component of the nuclear pore complex (NPC)-associated TREX-2 complex (transcription and export complex 2), composed of at least SUS1, SAC3, THP1, SEM1, and CDC31. TREX-2 contains 2 SUS1 chains. The TREX-2 complex interacts with the mRNA export factors MEX67, MTR2 and SUB2, and the nucleoporin NUP1. Interacts directly with THP1, SAC3. Interacts directly with SGF11 and UBP8. Interacts with YRA1, MEX67 and with the RNA polymerase II.

Its subcellular location is the nucleus. The protein resides in the nucleoplasm. It is found in the cytoplasm. It localises to the P-body. Its function is as follows. Involved in mRNA export coupled transcription activation by association with both the TREX-2 and the SAGA complexes. SAGA acts as a general cofactor required for essentially all RNA polymerase II transcription. At the promoters, SAGA is required for transcription pre-initiation complex (PIC) recruitment. It influences RNA polymerase II transcriptional activity through different activities such as TBP interaction (via core/TAF module) and promoter selectivity, interaction with transcription activators (via Tra1/SPT module), and chromatin modification through histone acetylation (via HAT module) and deubiquitination (via DUB module). SAGA preferentially acetylates histones H3 (to form H3K9ac, H3K14ac, H3K18ac and H3K23ac) and H2B and deubiquitinates histone H2B. SAGA interacts with DNA via upstream activating sequences (UASs). Also identified in a modified version of SAGA named SALSA or SLIK. The cleavage of SPT7 and the absence of the SPT8 subunit in SLIK neither drive any major conformational differences in its structure compared with SAGA, nor significantly affect HAT, DUB, or DNA-binding activities. Within the SAGA complex, participates in a subcomplex with SGF11, SGF73 and UBP8 required for deubiquitination of H2B and for the maintenance of steady-state H3 methylation levels. The TREX-2 complex functions in docking export-competent ribonucleoprotein particles (mRNPs) to the nuclear entrance of the nuclear pore complex (nuclear basket), by association with components of the nuclear mRNA export machinery (MEX67-MTR2 and SUB2) in the nucleoplasm and the nucleoporin NUP1 at the nuclear basket. TREX-2 participates in mRNA export and accurate chromatin positioning in the nucleus by tethering genes to the nuclear periphery. SUS1 also has a role in mRNP biogenesis and maintenance of genome integrity through preventing RNA-mediated genome instability. Has a role in response to DNA damage induced by methyl methane sulfonate (MMS) and replication arrest induced by hydroxyurea. May also be involved in cytoplasmic mRNA decay by interaction with components of P-bodies. This Saccharomyces cerevisiae (strain ATCC 204508 / S288c) (Baker's yeast) protein is SAGA complex subunit SUS1.